Reading from the N-terminus, the 136-residue chain is Small ribosomal subunit protein uS9 (136 aa).

It belongs to the universal ribosomal protein uS9 family.

This chain is Small ribosomal subunit protein uS9, found in Synechococcus sp. (strain JA-2-3B'a(2-13)) (Cyanobacteria bacterium Yellowstone B-Prime).